Reading from the N-terminus, the 275-residue chain is Lectin 8 (275 aa).

Residues 1–31 (MANSNPKLLVTQNPFSVFLLTFLLLITNVKS) form the signal peptide. 2 N-linked (GlcNAc...) asparagine glycosylation sites follow: Asn55 and Asn150.

It belongs to the leguminous lectin family.

May be involved in arbuscular mycorrhizal (AM) symbiosis with AM fungi. The protein is Lectin 8 of Medicago truncatula (Barrel medic).